We begin with the raw amino-acid sequence, 174 residues long: NADH-quinone oxidoreductase subunit I (174 aa).

4Fe-4S ferredoxin-type domains lie at 61–91 (LTVK…ITAA) and 103–132 (ISYE…LGPE). [4Fe-4S] cluster contacts are provided by C71, C74, C77, C81, C112, C115, C118, and C122.

This sequence belongs to the complex I 23 kDa subunit family. As to quaternary structure, NDH-1 is composed of 14 different subunits. Subunits NuoA, H, J, K, L, M, N constitute the membrane sector of the complex. It depends on [4Fe-4S] cluster as a cofactor.

The protein resides in the cell inner membrane. The catalysed reaction is a quinone + NADH + 5 H(+)(in) = a quinol + NAD(+) + 4 H(+)(out). NDH-1 shuttles electrons from NADH, via FMN and iron-sulfur (Fe-S) centers, to quinones in the respiratory chain. The immediate electron acceptor for the enzyme in this species is believed to be ubiquinone. Couples the redox reaction to proton translocation (for every two electrons transferred, four hydrogen ions are translocated across the cytoplasmic membrane), and thus conserves the redox energy in a proton gradient. The protein is NADH-quinone oxidoreductase subunit I of Bdellovibrio bacteriovorus (strain ATCC 15356 / DSM 50701 / NCIMB 9529 / HD100).